The following is a 122-amino-acid chain: Large ribosomal subunit protein uL14 (122 aa).

This sequence belongs to the universal ribosomal protein uL14 family. As to quaternary structure, part of the 50S ribosomal subunit. Forms a cluster with proteins L3 and L19. In the 70S ribosome, L14 and L19 interact and together make contacts with the 16S rRNA in bridges B5 and B8.

Functionally, binds to 23S rRNA. Forms part of two intersubunit bridges in the 70S ribosome. This chain is Large ribosomal subunit protein uL14, found in Treponema denticola (strain ATCC 35405 / DSM 14222 / CIP 103919 / JCM 8153 / KCTC 15104).